Consider the following 302-residue polypeptide: GLABROUS1 enhancer-binding protein (302 aa).

Disordered regions lie at residues 1-55 and 158-229; these read MVTP…MKKK and GQGD…NDDD. Ser-27 is subject to Phosphoserine. Positions 180–195 are enriched in basic and acidic residues; it reads RTNESGEEMLKEHEEE. Positions 208–217 are enriched in polar residues; it reads AKTTENGTSS. Positions 270-291 are non-canonical leucine-zipper; sequence LSDEWKALCVEETRFNIKKLRF.

Belongs to the GeBP family. In terms of assembly, homo- and heterodimers. Interacts with GPL1, GPL2 and GPL3. Interacts with KIN10, KIN11 and FLZ4. Interacts with KIN10 and KIN11 via its N-terminal part. Interacts with GPL1 and GPL3 via its C-terminal part. As to expression, expressed in the apical meristem and young leaf primordia. Not detected in emerging or mature leaves. Detected in the vascular tissues of cotyledons and leaves, in hydathodes and at the base of flowers and siliques, but not in roots.

The protein resides in the nucleus. It is found in the nucleolus. In terms of biological role, DNA-binding protein, which specifically recognizes the GL1 enhancer sequence. May be involved in leaf initiation. May play redundant roles with GPL1 and GPL2 in cytokinin responses by regulating the transcript levels of type-A ARR response genes. Involved in stress responses. Plays a repressive role in cell expansion by counteracting the positive role of CPR5 in this process, but does not regulate cell proliferation or endoreduplication. May play a role in plant defense. The chain is GLABROUS1 enhancer-binding protein from Arabidopsis thaliana (Mouse-ear cress).